A 578-amino-acid polypeptide reads, in one-letter code: Solute carrier family 15 member 3 (578 aa).

Residues 1–15 are compositionally biased toward basic and acidic residues; that stretch reads MSAPRAEEQPSRSGE. Residues 1 to 27 form a disordered region; sequence MSAPRAEEQPSRSGERQPLVARGPRGP. 5 consecutive transmembrane segments (helical) span residues 33 to 53, 77 to 97, 102 to 122, 155 to 175, and 201 to 221; these read TAAA…FGVT, LLFL…ADVY, LTIS…LTTI, PYCA…ASSV, and WFYW…AFIE. N-linked (GlcNAc...) asparagine glycosylation occurs at N223. Residues 232–252 form a helical membrane-spanning segment; the sequence is IIVGLVGLAFFIFLFATPVFI. A disordered region spans residues 280–301; it reads SRDSESAHLLPDQRSNQPGPSP. Residues 308–328 traverse the membrane as a helical segment; the sequence is FQVLVKILPVMVTLVPYWMVY. The N-linked (GlcNAc...) asparagine glycan is linked to N353. Helical transmembrane passes span 367–387 and 405–425; these read IPEA…IPVK and LQKM…AGVL. N436 is a glycosylation site (N-linked (GlcNAc...) asparagine). 3 helical membrane passes run 462-481, 494-514, and 538-558; these read YLLI…EFAY, GIFF…VALL, and YFFL…WIAG.

The protein belongs to the major facilitator superfamily. Proton-dependent oligopeptide transporter (POT/PTR) (TC 2.A.17) family. Expressed highly in bone marrow derived macrophages, and weakly in spleen and lung. Expressed in plasmacytoid dendritic cells (pDCs) in response to toll-like receptors (TLR) stimulation.

The protein resides in the lysosome membrane. Its subcellular location is the endosome membrane. It catalyses the reaction N-acetyl-D-muramoyl-L-alanyl-D-isoglutamine(out) + n H(+)(out) = N-acetyl-D-muramoyl-L-alanyl-D-isoglutamine(in) + n H(+)(in). It carries out the reaction glycylglycylglycine(out) + n H(+)(out) = glycylglycylglycine(in) + n H(+)(in). The catalysed reaction is carnosine(out) + n H(+)(out) = carnosine(in) + n H(+)(in). The enzyme catalyses L-histidine(out) + n H(+)(out) = L-histidine(in) + n H(+)(in). Functionally, proton-coupled amino-acid transporter that transports free histidine and certain di- and tripeptides, and is involved in innate immune response. Also able to transport carnosine. Involved in the detection of microbial pathogens by toll-like receptors (TLRs) and NOD-like receptors (NLRs), probably by mediating transport of bacterial peptidoglycans across the endolysosomal membrane: catalyzes the transport of certain bacterial peptidoglycans, such as muramyl dipeptide (MDP), the NOD2 ligand. In Mus musculus (Mouse), this protein is Solute carrier family 15 member 3.